The sequence spans 460 residues: Phosphoglucosamine mutase (460 aa).

Residue Ser-102 is the Phosphoserine intermediate of the active site. Mg(2+) contacts are provided by Ser-102, Asp-241, Asp-243, and Asp-245. Ser-102 carries the post-translational modification Phosphoserine.

This sequence belongs to the phosphohexose mutase family. Mg(2+) is required as a cofactor. In terms of processing, activated by phosphorylation.

It carries out the reaction alpha-D-glucosamine 1-phosphate = D-glucosamine 6-phosphate. Functionally, catalyzes the conversion of glucosamine-6-phosphate to glucosamine-1-phosphate. The chain is Phosphoglucosamine mutase from Verminephrobacter eiseniae (strain EF01-2).